The chain runs to 628 residues: CMP-5'-(3-aminopropyl)phosphonate synthase (628 aa).

A mobA-like NTP transferase region spans residues 1–255 (MNENRTFATP…DPGDQRQADF (255 aa)). The tract at residues 278–628 (GVTDHALLYN…TTEGAGRADG (351 aa)) is decarboxylase. The residue at position 466 (Lys466) is an N6-(pyridoxal phosphate)lysine.

This sequence in the N-terminal section; belongs to the MobA family. In the C-terminal section; belongs to the class-I pyridoxal-phosphate-dependent aminotransferase family. Mg(2+) serves as cofactor. The cofactor is pyridoxal 5'-phosphate.

The enzyme catalyses 2-amino-4-phosphonobutanoate + CTP = CMP-5'-(3-amino-3-carboxypropyl)phosphonate + diphosphate. It catalyses the reaction CMP-5'-(3-amino-3-carboxypropyl)phosphonate + H(+) = CMP-5'-(3-aminopropyl)phosphonate + CO2. The protein operates within antibiotic biosynthesis. Its function is as follows. Bifunctional cytidylyltransferase/decarboxylase involved in the biosynthesis of the phosphonate antibiotic FR-900098, a potent antimalarial agent that acts as an inhibitor of 1-deoxy-D-xylulose 5-phosphate reductoisomerase (DXR), the first enzyme in the nonmevalonate pathway for isoprenoid biosynthesis. Catalyzes the condensation of 2-amino-4-phosphonobutyrate (2APn) and CTP to form CMP-5'-2APn and then decarboxylates CMP-5'-2APn to yield CMP-5'-(3-aminopropyl)phosphonate (CMP-5'-3APn). This chain is CMP-5'-(3-aminopropyl)phosphonate synthase, found in Streptomyces rubellomurinus (strain ATCC 31215).